A 192-amino-acid chain; its full sequence is Peptidyl-tRNA hydrolase (192 aa).

Residue Y17 coordinates tRNA. Catalysis depends on H22, which acts as the Proton acceptor. Residues F68, N70, and N116 each coordinate tRNA.

It belongs to the PTH family. As to quaternary structure, monomer.

Its subcellular location is the cytoplasm. The catalysed reaction is an N-acyl-L-alpha-aminoacyl-tRNA + H2O = an N-acyl-L-amino acid + a tRNA + H(+). In terms of biological role, hydrolyzes ribosome-free peptidyl-tRNAs (with 1 or more amino acids incorporated), which drop off the ribosome during protein synthesis, or as a result of ribosome stalling. Its function is as follows. Catalyzes the release of premature peptidyl moieties from peptidyl-tRNA molecules trapped in stalled 50S ribosomal subunits, and thus maintains levels of free tRNAs and 50S ribosomes. The protein is Peptidyl-tRNA hydrolase of Xylella fastidiosa (strain Temecula1 / ATCC 700964).